The chain runs to 238 residues: Ribonuclease PH (238 aa).

Phosphate contacts are provided by residues R86 and 124–126 (GTR).

Belongs to the RNase PH family. Homohexameric ring arranged as a trimer of dimers.

It carries out the reaction tRNA(n+1) + phosphate = tRNA(n) + a ribonucleoside 5'-diphosphate. In terms of biological role, phosphorolytic 3'-5' exoribonuclease that plays an important role in tRNA 3'-end maturation. Removes nucleotide residues following the 3'-CCA terminus of tRNAs; can also add nucleotides to the ends of RNA molecules by using nucleoside diphosphates as substrates, but this may not be physiologically important. Probably plays a role in initiation of 16S rRNA degradation (leading to ribosome degradation) during starvation. This chain is Ribonuclease PH, found in Salmonella agona (strain SL483).